A 341-amino-acid chain; its full sequence is uncharacterized protein (341 aa).

58–82 (ITGGSSGIGAAAAKKIAEAGGTVVL) is a binding site for NADP(+). Position 194 (Ser-194) interacts with substrate. The active-site Proton acceptor is the Tyr-207. The interval 309–329 (DSSAAKGSESQTDTSELDKRS) is disordered.

The protein belongs to the short-chain dehydrogenases/reductases (SDR) family.

This is an uncharacterized protein from Mycobacterium bovis (strain ATCC BAA-935 / AF2122/97).